We begin with the raw amino-acid sequence, 291 residues long: Cell division protein FtsX (291 aa).

The Cytoplasmic portion of the chain corresponds to 1–18 (MSSNFDKFQKRRLISSYF). The chain crosses the membrane as a helical span at residues 19–39 (SVVLSVFLVLFLLGVLGLFII). At 40-162 (NSKKLADDFK…VNLVNDNIKK (123 aa)) the chain is on the periplasmic side. The chain crosses the membrane as a helical span at residues 163-183 (VSMWILIISGFLTVIAVLLIN). The Cytoplasmic portion of the chain corresponds to 184 to 220 (SSLRLSIHSNRFIIKTMQMVGATKSFIRKPFVMRSVK). The chain crosses the membrane as a helical span at residues 221–241 (LGMLGALLAIIALIGLLFYVE). At 242–253 (TNFPGLGILEDK) the chain is on the periplasmic side. A helical membrane pass occupies residues 254 to 274 (ALIGLVLLAVFGLGVLITWVS). At 275–291 (THFATQRFLNLRTDDLY) the chain is on the cytoplasmic side.

The protein belongs to the ABC-4 integral membrane protein family. FtsX subfamily.

The protein localises to the cell inner membrane. Required for cell division and gliding motility. The polypeptide is Cell division protein FtsX (Flavobacterium johnsoniae (strain ATCC 17061 / DSM 2064 / JCM 8514 / BCRC 14874 / CCUG 350202 / NBRC 14942 / NCIMB 11054 / UW101) (Cytophaga johnsonae)).